The primary structure comprises 174 residues: Probable adenylyl-sulfate kinase (174 aa).

Gly-10 to Thr-17 is an ATP binding site. Ser-84 (phosphoserine intermediate) is an active-site residue.

It belongs to the APS kinase family.

The enzyme catalyses adenosine 5'-phosphosulfate + ATP = 3'-phosphoadenylyl sulfate + ADP + H(+). It participates in sulfur metabolism; hydrogen sulfide biosynthesis; sulfite from sulfate: step 2/3. Its function is as follows. Catalyzes the synthesis of activated sulfate. This chain is Probable adenylyl-sulfate kinase (cysC), found in Pyrococcus abyssi (strain GE5 / Orsay).